The following is a 273-amino-acid chain: 4-hydroxy-tetrahydrodipicolinate reductase (273 aa).

Residues 12 to 17 (GAGGRM) and Glu38 contribute to the NAD(+) site. Arg39 provides a ligand contact to NADP(+). Residues 102 to 104 (GTT) and 126 to 129 (AANF) each bind NAD(+). His159 serves as the catalytic Proton donor/acceptor. Residue His160 coordinates (S)-2,3,4,5-tetrahydrodipicolinate. Lys163 serves as the catalytic Proton donor. 169-170 (GT) lines the (S)-2,3,4,5-tetrahydrodipicolinate pocket.

Belongs to the DapB family. Homotetramer.

It is found in the cytoplasm. The catalysed reaction is (S)-2,3,4,5-tetrahydrodipicolinate + NAD(+) + H2O = (2S,4S)-4-hydroxy-2,3,4,5-tetrahydrodipicolinate + NADH + H(+). It carries out the reaction (S)-2,3,4,5-tetrahydrodipicolinate + NADP(+) + H2O = (2S,4S)-4-hydroxy-2,3,4,5-tetrahydrodipicolinate + NADPH + H(+). It functions in the pathway amino-acid biosynthesis; L-lysine biosynthesis via DAP pathway; (S)-tetrahydrodipicolinate from L-aspartate: step 4/4. Its function is as follows. Catalyzes the conversion of 4-hydroxy-tetrahydrodipicolinate (HTPA) to tetrahydrodipicolinate. This Salmonella typhimurium (strain LT2 / SGSC1412 / ATCC 700720) protein is 4-hydroxy-tetrahydrodipicolinate reductase.